Reading from the N-terminus, the 101-residue chain is Protein Tat (101 aa).

The interaction with human CREBBP stretch occupies residues 1-24 (MEPVDPNREPWNHPGSQPKTACTN). Positions 1–48 (MEPVDPNREPWNHPGSQPKTACTNCYCKKCCYHCQVCFLQKGLGISYG) are transactivation. Zn(2+) is bound by residues C22, C25, and C27. Residues 22-37 (CTNCYCKKCCYHCQVC) are cysteine-rich. At K28 the chain carries N6-acetyllysine; by host PCAF. Zn(2+)-binding residues include C30, H33, C34, and C37. The segment at 38 to 48 (FLQKGLGISYG) is core. The segment at 48 to 101 (GRKKRRQRRSAPPGSKNHQDLIPEQPLFQTQRKPTGPEESKKEVESKAEPDRFD) is disordered. The short motif at 49–57 (RKKRRQRRS) is the Nuclear localization signal, RNA-binding (TAR), and protein transduction element. An interaction with the host capping enzyme RNGTT region spans residues 49–86 (RKKRRQRRSAPPGSKNHQDLIPEQPLFQTQRKPTGPEE). N6-acetyllysine; by host EP300 and GCN5L2 is present on residues K50 and K51. An asymmetric dimethylarginine; by host PRMT6 mark is found at R52 and R53. Residues 82–101 (TGPEESKKEVESKAEPDRFD) show a composition bias toward basic and acidic residues.

Belongs to the lentiviruses Tat family. As to quaternary structure, interacts with host CCNT1. Associates with the P-TEFb complex composed at least of Tat, P-TEFb (CDK9 and CCNT1), TAR RNA, RNA Pol II. Recruits the HATs CREBBP, TAF1/TFIID, EP300, PCAF and GCN5L2. Interacts with host KAT5/Tip60; this interaction targets the latter to degradation. Interacts with the host deacetylase SIRT1. Interacts with host capping enzyme RNGTT; this interaction stimulates RNGTT. Binds to host KDR, and to the host integrins ITGAV/ITGB3 and ITGA5/ITGB1. Interacts with host KPNB1/importin beta-1 without previous binding to KPNA1/importin alpha-1. Interacts with EIF2AK2. Interacts with host nucleosome assembly protein NAP1L1; this interaction may be required for the transport of Tat within the nucleus, since the two proteins interact at the nuclear rim. Interacts with host C1QBP/SF2P32; this interaction involves lysine-acetylated Tat. Interacts with the host chemokine receptors CCR2, CCR3 and CXCR4. Interacts with host DPP4/CD26; this interaction may trigger an anti-proliferative effect. Interacts with host LDLR. Interacts with the host extracellular matrix metalloproteinase MMP1. Interacts with host PRMT6; this interaction mediates Tat's methylation. Interacts with, and is ubiquitinated by MDM2/Hdm2. Interacts with host PSMC3 and HTATIP2. Interacts with STAB1; this interaction may overcome SATB1-mediated repression of IL2 and IL2RA (interleukin) in T cells by binding to the same domain than HDAC1. Interacts (when acetylated) with human CDK13, thereby increasing HIV-1 mRNA splicing and promoting the production of the doubly spliced HIV-1 protein Nef. Interacts with host TBP; this interaction modulates the activity of transcriptional pre-initiation complex. Interacts with host RELA. Interacts with host PLSCR1; this interaction negatively regulates Tat transactivation activity by altering its subcellular distribution. Asymmetrical arginine methylation by host PRMT6 seems to diminish the transactivation capacity of Tat and affects the interaction with host CCNT1. Post-translationally, acetylation by EP300, CREBBP, GCN5L2/GCN5 and PCAF regulates the transactivation activity of Tat. EP300-mediated acetylation of Lys-50 promotes dissociation of Tat from the TAR RNA through the competitive binding to PCAF's bromodomain. In addition, the non-acetylated Tat's N-terminus can also interact with PCAF. PCAF-mediated acetylation of Lys-28 enhances Tat's binding to CCNT1. Lys-50 is deacetylated by SIRT1. In terms of processing, polyubiquitination by host MDM2 does not target Tat to degradation, but activates its transactivation function and fosters interaction with CCNT1 and TAR RNA. Phosphorylated by EIF2AK2 on serine and threonine residues adjacent to the basic region important for TAR RNA binding and function. Phosphorylation of Tat by EIF2AK2 is dependent on the prior activation of EIF2AK2 by dsRNA.

The protein localises to the host nucleus. It is found in the host nucleolus. The protein resides in the host cytoplasm. Its subcellular location is the secreted. Its function is as follows. Transcriptional activator that increases RNA Pol II processivity, thereby increasing the level of full-length viral transcripts. Recognizes a hairpin structure at the 5'-LTR of the nascent viral mRNAs referred to as the transactivation responsive RNA element (TAR) and recruits the cyclin T1-CDK9 complex (P-TEFb complex) that will in turn hyperphosphorylate the RNA polymerase II to allow efficient elongation. The CDK9 component of P-TEFb and other Tat-activated kinases hyperphosphorylate the C-terminus of RNA Pol II that becomes stabilized and much more processive. Other factors such as HTATSF1/Tat-SF1, SUPT5H/SPT5, and HTATIP2 are also important for Tat's function. Besides its effect on RNA Pol II processivity, Tat induces chromatin remodeling of proviral genes by recruiting the histone acetyltransferases (HATs) CREBBP, EP300 and PCAF to the chromatin. This also contributes to the increase in proviral transcription rate, especially when the provirus integrates in transcriptionally silent region of the host genome. To ensure maximal activation of the LTR, Tat mediates nuclear translocation of NF-kappa-B by interacting with host RELA. Through its interaction with host TBP, Tat may also modulate transcription initiation. Tat can reactivate a latently infected cell by penetrating in it and transactivating its LTR promoter. In the cytoplasm, Tat is thought to act as a translational activator of HIV-1 mRNAs. Extracellular circulating Tat can be endocytosed by surrounding uninfected cells via the binding to several surface receptors such as CD26, CXCR4, heparan sulfate proteoglycans (HSPG) or LDLR. Neurons are rarely infected, but they internalize Tat via their LDLR. Through its interaction with nuclear HATs, Tat is potentially able to control the acetylation-dependent cellular gene expression. Modulates the expression of many cellular genes involved in cell survival, proliferation or in coding for cytokines or cytokine receptors. Tat plays a role in T-cell and neurons apoptosis. Tat induced neurotoxicity and apoptosis probably contribute to neuroAIDS. Circulating Tat also acts as a chemokine-like and/or growth factor-like molecule that binds to specific receptors on the surface of the cells, affecting many cellular pathways. In the vascular system, Tat binds to ITGAV/ITGB3 and ITGA5/ITGB1 integrins dimers at the surface of endothelial cells and competes with bFGF for heparin-binding sites, leading to an excess of soluble bFGF. This is Protein Tat from Human immunodeficiency virus type 1 group M subtype J (isolate SE9173) (HIV-1).